The following is a 354-amino-acid chain: UDP-N-acetylglucosamine--N-acetylmuramyl-(pentapeptide) pyrophosphoryl-undecaprenol N-acetylglucosamine transferase (354 aa).

UDP-N-acetyl-alpha-D-glucosamine contacts are provided by residues 14-16, Asn126, Arg162, Ser190, Ile243, 262-267, and Gln287; these read TGG and ALTVSE.

This sequence belongs to the glycosyltransferase 28 family. MurG subfamily.

The protein resides in the cell inner membrane. It carries out the reaction di-trans,octa-cis-undecaprenyl diphospho-N-acetyl-alpha-D-muramoyl-L-alanyl-D-glutamyl-meso-2,6-diaminopimeloyl-D-alanyl-D-alanine + UDP-N-acetyl-alpha-D-glucosamine = di-trans,octa-cis-undecaprenyl diphospho-[N-acetyl-alpha-D-glucosaminyl-(1-&gt;4)]-N-acetyl-alpha-D-muramoyl-L-alanyl-D-glutamyl-meso-2,6-diaminopimeloyl-D-alanyl-D-alanine + UDP + H(+). The protein operates within cell wall biogenesis; peptidoglycan biosynthesis. In terms of biological role, cell wall formation. Catalyzes the transfer of a GlcNAc subunit on undecaprenyl-pyrophosphoryl-MurNAc-pentapeptide (lipid intermediate I) to form undecaprenyl-pyrophosphoryl-MurNAc-(pentapeptide)GlcNAc (lipid intermediate II). In Photobacterium profundum (strain SS9), this protein is UDP-N-acetylglucosamine--N-acetylmuramyl-(pentapeptide) pyrophosphoryl-undecaprenol N-acetylglucosamine transferase.